Reading from the N-terminus, the 119-residue chain is NADH dehydrogenase [ubiquinone] 1 subunit C2 (119 aa).

Residues 56-75 (GLHRQLLYITAFFFAGYYLV) form a helical membrane-spanning segment.

It belongs to the complex I NDUFC2 subunit family. Complex I is composed of 45 different subunits. Interacts with TMEM242.

The protein localises to the mitochondrion inner membrane. Accessory subunit of the mitochondrial membrane respiratory chain NADH dehydrogenase (Complex I), that is believed not to be involved in catalysis but required for the complex assembly. Complex I functions in the transfer of electrons from NADH to the respiratory chain. The immediate electron acceptor for the enzyme is believed to be ubiquinone. The protein is NADH dehydrogenase [ubiquinone] 1 subunit C2 of Pongo pygmaeus (Bornean orangutan).